We begin with the raw amino-acid sequence, 252 residues long: 5-oxoprolinase subunit A (252 aa).

The protein belongs to the LamB/PxpA family. Forms a complex composed of PxpA, PxpB and PxpC.

It carries out the reaction 5-oxo-L-proline + ATP + 2 H2O = L-glutamate + ADP + phosphate + H(+). Catalyzes the cleavage of 5-oxoproline to form L-glutamate coupled to the hydrolysis of ATP to ADP and inorganic phosphate. The polypeptide is 5-oxoprolinase subunit A (Staphylococcus carnosus (strain TM300)).